The sequence spans 66 residues: Large ribosomal subunit protein bL35 (66 aa).

2 stretches are compositionally biased toward basic residues: residues 1–16 (MPKFKTHRASAKRFKR) and 23–45 (KRSHAYTSHRFHGKTKKQRRQLR). The tract at residues 1–66 (MPKFKTHRAS…RIRQMLSGLK (66 aa)) is disordered.

The protein belongs to the bacterial ribosomal protein bL35 family.

This Latilactobacillus sakei subsp. sakei (strain 23K) (Lactobacillus sakei subsp. sakei) protein is Large ribosomal subunit protein bL35.